Here is a 486-residue protein sequence, read N- to C-terminus: tRNA (uracil-5-)-methyltransferase homolog B (486 aa).

S-adenosyl-L-methionine-binding residues include glutamine 305, glutamate 355, and asparagine 405. Cysteine 433 serves as the catalytic Nucleophile. Residue glutamate 479 is the Proton acceptor of the active site.

Belongs to the class I-like SAM-binding methyltransferase superfamily. RNA M5U methyltransferase family.

It is found in the mitochondrion matrix. It catalyses the reaction uridine(54) in tRNA + S-adenosyl-L-methionine = 5-methyluridine(54) in tRNA + S-adenosyl-L-homocysteine + H(+). The enzyme catalyses a uridine in 12S rRNA + S-adenosyl-L-methionine = a 5-methyluridine in 12S rRNA + S-adenosyl-L-homocysteine + H(+). In terms of biological role, mitochondrial S-adenosyl-L-methionine-dependent methyltransferase that catalyzes the formation of 5-methyl-uridine in tRNAs and 12S rRNA. Catalyzes the methylation of uridine at position 54 (m5U54) in all tRNAs. Specifically methylates the uridine in position 429 of 12S rRNA (m5U429). Does not affect RNA stability or mitochondrial translation. The polypeptide is tRNA (uracil-5-)-methyltransferase homolog B (TRMT2B) (Pongo abelii (Sumatran orangutan)).